A 186-amino-acid polypeptide reads, in one-letter code: Ribosome-recycling factor (186 aa).

This sequence belongs to the RRF family.

The protein localises to the cytoplasm. Its function is as follows. Responsible for the release of ribosomes from messenger RNA at the termination of protein biosynthesis. May increase the efficiency of translation by recycling ribosomes from one round of translation to another. The chain is Ribosome-recycling factor from Bartonella henselae (strain ATCC 49882 / DSM 28221 / CCUG 30454 / Houston 1) (Rochalimaea henselae).